Reading from the N-terminus, the 355-residue chain is Lipopolysaccharide heptosyltransferase 1 (355 aa).

ADP-L-glycero-beta-D-manno-heptose is bound by residues T186, T187, K191, E221, D260, T261, G262, and H265.

This sequence belongs to the glycosyltransferase 9 family.

The protein resides in the cell inner membrane. The catalysed reaction is an alpha-Kdo-(2-&gt;4)-alpha-Kdo-(2-&gt;6)-lipid A + ADP-L-glycero-beta-D-manno-heptose = an L-alpha-D-Hep-(1-&gt;5)-[alpha-Kdo-(2-&gt;4)]-alpha-Kdo-(2-&gt;6)-lipid A + ADP + H(+). It participates in bacterial outer membrane biogenesis; LPS core biosynthesis. Its function is as follows. Glycosyltransferase involved in the biosynthesis of the core oligosaccharide region of lipopolysaccharide (LPS). Catalyzes the addition of the first heptose unit to one 3-deoxy-D-manno-octulosonic acid (Kdo) residue of the Kdo2-lipid A module. This Pseudomonas aeruginosa (strain ATCC 15692 / DSM 22644 / CIP 104116 / JCM 14847 / LMG 12228 / 1C / PRS 101 / PAO1) protein is Lipopolysaccharide heptosyltransferase 1.